Consider the following 517-residue polypeptide: GMP synthase [glutamine-hydrolyzing] (517 aa).

In terms of domain architecture, Glutamine amidotransferase type-1 spans 11–202; that stretch reads KIIVLDFGSQ…AFDVCGAKDN (192 aa). The active-site Nucleophile is the C88. Catalysis depends on residues H176 and E178. Residues 203-392 enclose the GMPS ATP-PPase domain; it reads WTMDDFIKLS…LGLPHDLVWR (190 aa). 230 to 236 serves as a coordination point for ATP; it reads SGGVDSS.

Homodimer.

The catalysed reaction is XMP + L-glutamine + ATP + H2O = GMP + L-glutamate + AMP + diphosphate + 2 H(+). It functions in the pathway purine metabolism; GMP biosynthesis; GMP from XMP (L-Gln route): step 1/1. Functionally, catalyzes the synthesis of GMP from XMP. The polypeptide is GMP synthase [glutamine-hydrolyzing] (Lactobacillus delbrueckii subsp. bulgaricus (strain ATCC 11842 / DSM 20081 / BCRC 10696 / JCM 1002 / NBRC 13953 / NCIMB 11778 / NCTC 12712 / WDCM 00102 / Lb 14)).